Reading from the N-terminus, the 130-residue chain is Small ribosomal subunit protein uS8 (130 aa).

This sequence belongs to the universal ribosomal protein uS8 family. In terms of assembly, part of the 30S ribosomal subunit. Contacts proteins S5 and S12.

Its function is as follows. One of the primary rRNA binding proteins, it binds directly to 16S rRNA central domain where it helps coordinate assembly of the platform of the 30S subunit. The polypeptide is Small ribosomal subunit protein uS8 (Vibrio atlanticus (strain LGP32) (Vibrio splendidus (strain Mel32))).